The following is a 172-amino-acid chain: Nicotinamide-nucleotide adenylyltransferase (172 aa).

It belongs to the archaeal NMN adenylyltransferase family.

It localises to the cytoplasm. The catalysed reaction is beta-nicotinamide D-ribonucleotide + ATP + H(+) = diphosphate + NAD(+). The protein operates within cofactor biosynthesis; NAD(+) biosynthesis; NAD(+) from nicotinamide D-ribonucleotide: step 1/1. The chain is Nicotinamide-nucleotide adenylyltransferase from Aeropyrum pernix (strain ATCC 700893 / DSM 11879 / JCM 9820 / NBRC 100138 / K1).